Reading from the N-terminus, the 178-residue chain is Large ribosomal subunit protein uL6 (178 aa).

Belongs to the universal ribosomal protein uL6 family. Part of the 50S ribosomal subunit.

Its function is as follows. This protein binds to the 23S rRNA, and is important in its secondary structure. It is located near the subunit interface in the base of the L7/L12 stalk, and near the tRNA binding site of the peptidyltransferase center. The protein is Large ribosomal subunit protein uL6 of Streptococcus sanguinis (strain SK36).